Consider the following 315-residue polypeptide: Methionyl-tRNA formyltransferase (315 aa).

113–116 (SLLP) contacts (6S)-5,6,7,8-tetrahydrofolate.

Belongs to the Fmt family.

It catalyses the reaction L-methionyl-tRNA(fMet) + (6R)-10-formyltetrahydrofolate = N-formyl-L-methionyl-tRNA(fMet) + (6S)-5,6,7,8-tetrahydrofolate + H(+). Functionally, attaches a formyl group to the free amino group of methionyl-tRNA(fMet). The formyl group appears to play a dual role in the initiator identity of N-formylmethionyl-tRNA by promoting its recognition by IF2 and preventing the misappropriation of this tRNA by the elongation apparatus. In Shigella dysenteriae serotype 1 (strain Sd197), this protein is Methionyl-tRNA formyltransferase.